Reading from the N-terminus, the 298-residue chain is Ethanolamine ammonia-lyase small subunit (298 aa).

The adenosylcob(III)alamin site is built by Val-210, Glu-231, and Cys-261.

This sequence belongs to the EutC family. As to quaternary structure, the basic unit is a heterodimer which dimerizes to form tetramers. The heterotetramers trimerize; 6 large subunits form a core ring with 6 small subunits projecting outwards. The cofactor is adenosylcob(III)alamin.

It localises to the bacterial microcompartment. It carries out the reaction ethanolamine = acetaldehyde + NH4(+). The protein operates within amine and polyamine degradation; ethanolamine degradation. In terms of biological role, catalyzes the deamination of various vicinal amino-alcohols to oxo compounds. Allows this organism to utilize ethanolamine as the sole source of nitrogen and carbon in the presence of external vitamin B12. This Salmonella schwarzengrund (strain CVM19633) protein is Ethanolamine ammonia-lyase small subunit.